A 518-amino-acid chain; its full sequence is 2-isopropylmalate synthase (518 aa).

The Pyruvate carboxyltransferase domain occupies 24-275 (VYIFDTTLRD…KTNIKTQKLY (252 aa)). A divalent metal cation is bound by residues Asp-33, His-213, His-215, and Asn-249.

The protein belongs to the alpha-IPM synthase/homocitrate synthase family. As to quaternary structure, homodimer. It depends on a divalent metal cation as a cofactor.

It carries out the reaction 3-methyl-2-oxobutanoate + acetyl-CoA + H2O = (2S)-2-isopropylmalate + CoA + H(+). It functions in the pathway amino-acid biosynthesis; L-leucine biosynthesis; L-leucine from 3-methyl-2-oxobutanoate: step 1/4. In terms of biological role, catalyzes the condensation of the acetyl group of acetyl-CoA with 3-methyl-2-oxobutanoate (2-oxoisovalerate) to form 3-carboxy-3-hydroxy-4-methylpentanoate (2-isopropylmalate). This Methanocaldococcus jannaschii (strain ATCC 43067 / DSM 2661 / JAL-1 / JCM 10045 / NBRC 100440) (Methanococcus jannaschii) protein is 2-isopropylmalate synthase (leuA).